We begin with the raw amino-acid sequence, 306 residues long: Peroxisome biogenesis factor 10 (306 aa).

At 1-52 the chain is on the peroxisomal matrix side; sequence MHLSAHIDPLQIILCTEIDEACIQFIKSQIEGIARACGPRMQANFEGVLIPY. Residues 53–84 traverse the membrane as a helical segment; it reads VDVLGKFLYRACCLRYATMGEEAARIVLAKQD. Over 85 to 147 the chain is Cytoplasmic; it reads RSKGLVLATT…PEAVISKEKH (63 aa). The chain crosses the membrane as a helical span at residues 148–174; that stretch reads LVYILNSFKPILLKLVSIIRFLCLTMK. Residues 175–202 are Peroxisomal matrix-facing; that stretch reads GHCATVSQLLLGLKYISLDEINPEEKKK. Residues 203-219 form a helical membrane-spanning segment; it reads VLTLLLLLGSRLIASIL. At 220–306 the chain is on the cytoplasmic side; it reads QHSNSYFDQH…SSPSKIILLR (87 aa). Residues Cys256, Cys259, Cys271, His273, Cys276, Cys279, Cys290, and Cys293 each contribute to the Zn(2+) site. The RING-type zinc-finger motif lies at 256 to 294; sequence CSLCMEFIHCPAATECGHIFCWSCINGWTSKKSECPLCR.

This sequence belongs to the pex2/pex10/pex12 family. In terms of assembly, component of the PEX2-PEX10-PEX12 retrotranslocation channel, composed of PEX2, PEX10 and PEX12.

The protein localises to the peroxisome membrane. It carries out the reaction S-ubiquitinyl-[E2 ubiquitin-conjugating enzyme]-L-cysteine + [acceptor protein]-L-lysine = [E2 ubiquitin-conjugating enzyme]-L-cysteine + N(6)-ubiquitinyl-[acceptor protein]-L-lysine.. It functions in the pathway protein modification; protein ubiquitination. The E3 ubiquitin-protein ligase activity is stimulated by PEX12. Its function is as follows. E3 ubiquitin-protein ligase component of a retrotranslocation channel required for peroxisome organization by mediating export of the PEX5 receptor from peroxisomes to the cytosol, thereby promoting PEX5 recycling. The retrotranslocation channel is composed of PEX2, PEX10 and PEX12; each subunit contributing transmembrane segments that coassemble into an open channel that specifically allows the passage of PEX5 through the peroxisomal membrane. PEX10 also regulates PEX5 recycling by acting as a E3 ubiquitin-protein ligase. When PEX5 recycling is compromised, PEX10 catalyzes polyubiquitination of PEX5 during its passage through the retrotranslocation channel, leading to its degradation. The protein is Peroxisome biogenesis factor 10 (pas4) of Schizosaccharomyces pombe (strain 972 / ATCC 24843) (Fission yeast).